A 299-amino-acid chain; its full sequence is ATP phosphoribosyltransferase (299 aa).

Belongs to the ATP phosphoribosyltransferase family. Long subfamily. Equilibrium between an active dimeric form, an inactive hexameric form and higher aggregates. Interconversion between the various forms is largely reversible and is influenced by the natural substrates and inhibitors of the enzyme. Mg(2+) is required as a cofactor.

Its subcellular location is the cytoplasm. The enzyme catalyses 1-(5-phospho-beta-D-ribosyl)-ATP + diphosphate = 5-phospho-alpha-D-ribose 1-diphosphate + ATP. The protein operates within amino-acid biosynthesis; L-histidine biosynthesis; L-histidine from 5-phospho-alpha-D-ribose 1-diphosphate: step 1/9. With respect to regulation, feedback inhibited by histidine. In terms of biological role, catalyzes the condensation of ATP and 5-phosphoribose 1-diphosphate to form N'-(5'-phosphoribosyl)-ATP (PR-ATP). Has a crucial role in the pathway because the rate of histidine biosynthesis seems to be controlled primarily by regulation of HisG enzymatic activity. This Buchnera aphidicola subsp. Baizongia pistaciae (strain Bp) protein is ATP phosphoribosyltransferase.